A 477-amino-acid chain; its full sequence is Trigger factor (477 aa).

A PPIase FKBP-type domain is found at 169-254 (EDRVTIDYLG…VKEVAKPNEL (86 aa)). The interval 435-477 (VSKEELTAEDEDAASEAKPAKKAAAKKKAAPKKKAEEGKSEEA) is disordered. Basic residues predominate over residues 454-466 (AKKAAAKKKAAPK). Basic and acidic residues predominate over residues 467–477 (KKAEEGKSEEA).

The protein belongs to the FKBP-type PPIase family. Tig subfamily.

Its subcellular location is the cytoplasm. The catalysed reaction is [protein]-peptidylproline (omega=180) = [protein]-peptidylproline (omega=0). Involved in protein export. Acts as a chaperone by maintaining the newly synthesized protein in an open conformation. Functions as a peptidyl-prolyl cis-trans isomerase. This chain is Trigger factor, found in Brucella suis biovar 1 (strain 1330).